Reading from the N-terminus, the 99-residue chain is Aspartyl/glutamyl-tRNA(Asn/Gln) amidotransferase subunit C (99 aa).

This sequence belongs to the GatC family. As to quaternary structure, heterotrimer of A, B and C subunits.

It carries out the reaction L-glutamyl-tRNA(Gln) + L-glutamine + ATP + H2O = L-glutaminyl-tRNA(Gln) + L-glutamate + ADP + phosphate + H(+). The catalysed reaction is L-aspartyl-tRNA(Asn) + L-glutamine + ATP + H2O = L-asparaginyl-tRNA(Asn) + L-glutamate + ADP + phosphate + 2 H(+). In terms of biological role, allows the formation of correctly charged Asn-tRNA(Asn) or Gln-tRNA(Gln) through the transamidation of misacylated Asp-tRNA(Asn) or Glu-tRNA(Gln) in organisms which lack either or both of asparaginyl-tRNA or glutaminyl-tRNA synthetases. The reaction takes place in the presence of glutamine and ATP through an activated phospho-Asp-tRNA(Asn) or phospho-Glu-tRNA(Gln). The polypeptide is Aspartyl/glutamyl-tRNA(Asn/Gln) amidotransferase subunit C (Rhodococcus erythropolis (strain PR4 / NBRC 100887)).